Reading from the N-terminus, the 602-residue chain is Threonine--tRNA ligase (602 aa).

A catalytic region spans residues 208–499; the sequence is DHRKLGTELK…LTEHCAGEFP (292 aa). Zn(2+) is bound by residues Cys300, His351, and His476.

Belongs to the class-II aminoacyl-tRNA synthetase family. Homodimer. Requires Zn(2+) as cofactor.

It localises to the cytoplasm. The catalysed reaction is tRNA(Thr) + L-threonine + ATP = L-threonyl-tRNA(Thr) + AMP + diphosphate + H(+). Functionally, catalyzes the attachment of threonine to tRNA(Thr) in a two-step reaction: L-threonine is first activated by ATP to form Thr-AMP and then transferred to the acceptor end of tRNA(Thr). Also edits incorrectly charged L-seryl-tRNA(Thr). The chain is Threonine--tRNA ligase from Campylobacter jejuni subsp. jejuni serotype O:23/36 (strain 81-176).